An 85-amino-acid polypeptide reads, in one-letter code: Toxin BmKaTx10 (85 aa).

The first 19 residues, 1–19, serve as a signal peptide directing secretion; it reads MNYLVMVSFALLLMTGVES. One can recognise an LCN-type CS-alpha/beta domain in the interval 21-83; it reads RDGYIALPHN…VPIRVPGRCH (63 aa). Cystine bridges form between Cys-31–Cys-82, Cys-35–Cys-55, Cys-41–Cys-65, and Cys-45–Cys-67.

It belongs to the long (4 C-C) scorpion toxin superfamily. Sodium channel inhibitor family. Alpha subfamily. In terms of tissue distribution, expressed by the venom gland.

It is found in the secreted. In terms of biological role, alpha toxins bind voltage-independently at site-3 of sodium channels (Nav) and inhibit the inactivation of the activated channels, thereby blocking neuronal transmission. This Olivierus martensii (Manchurian scorpion) protein is Toxin BmKaTx10.